A 335-amino-acid polypeptide reads, in one-letter code: tRNA N6-adenosine threonylcarbamoyltransferase (335 aa).

Fe cation is bound by residues H110 and H114. Residues 132-136, D165, G178, and N271 each bind substrate; that span reads LVSGG. Residue D299 participates in Fe cation binding.

This sequence belongs to the KAE1 / TsaD family. Fe(2+) is required as a cofactor.

Its subcellular location is the cytoplasm. It carries out the reaction L-threonylcarbamoyladenylate + adenosine(37) in tRNA = N(6)-L-threonylcarbamoyladenosine(37) in tRNA + AMP + H(+). Functionally, required for the formation of a threonylcarbamoyl group on adenosine at position 37 (t(6)A37) in tRNAs that read codons beginning with adenine. Is involved in the transfer of the threonylcarbamoyl moiety of threonylcarbamoyl-AMP (TC-AMP) to the N6 group of A37, together with TsaE and TsaB. TsaD likely plays a direct catalytic role in this reaction. In Campylobacter jejuni subsp. jejuni serotype O:2 (strain ATCC 700819 / NCTC 11168), this protein is tRNA N6-adenosine threonylcarbamoyltransferase.